An 853-amino-acid chain; its full sequence is FIGNL1-interacting regulator of recombination and mitosis (853 aa).

2 positions are modified to phosphoserine; by PLK1: S43 and S744. K792 carries the post-translational modification N6-acetyllysine.

In terms of assembly, interacts (via its N-terminal region) with PLK1; controls PLK1 kinase activity. Interacts (via the KVVXF motif) with PPP1CC; controls PLK1 kinase activity. Interacts with FIGNL1; may regulate homologous recombination. Post-translationally, phosphorylation at Ser-43 by PLK1 strengthens FIRRM-PLK1 interaction. Phosphorylation at Ser-744 by PLK1 negatively regulates its interaction with PPP1CC.

The protein resides in the chromosome. The protein localises to the centromere. Its subcellular location is the kinetochore. It is found in the nucleus. It localises to the midbody. The protein resides in the cytoplasm. The protein localises to the cytoskeleton. Its subcellular location is the spindle. Functionally, regulates PLK1 kinase activity at kinetochores and promotes faithful chromosome segregation in prometaphase by bridging kinase and phosphatase activities. Phosphorylation of FIRRM by PLK1 negatively regulates its interaction with the phosphatase, PPP1CC, thus creating a negative feedback loop for maintaining proper PLK1 kinase activity during mitosis. In complex with FIGL1 may regulate homologous recombination. This is FIGNL1-interacting regulator of recombination and mitosis from Homo sapiens (Human).